Consider the following 408-residue polypeptide: Tripartite motif-containing protein 59 (408 aa).

The RING-type zinc-finger motif lies at 10–60 (CSICYSLFEDPRVLPCSHTFCRSCLEGVIQLSSNFSIWRPLRVPLKCPNCR). The B box-type zinc-finger motif lies at 92–134 (SDVATCSEHYRQPLNVYCLLDKKLVCGHCLTIGKHNGHPIDDL). Zn(2+) contacts are provided by Cys-97, His-100, Cys-120, and His-126. Residues 163–247 (LIEKLKEQKA…LNTSIQKEES (85 aa)) are a coiled coil. A helical transmembrane segment spans residues 333-353 (ANPLSVTFIFTVIIAIAVLSF).

Belongs to the TRIM/RBCC family. In terms of assembly, interacts with ECSIT.

The protein localises to the endoplasmic reticulum membrane. Functionally, may serve as a multifunctional regulator for innate immune signaling pathways. The protein is Tripartite motif-containing protein 59 (TRIM59) of Gallus gallus (Chicken).